The following is a 140-amino-acid chain: UPF0134 protein MPN_094 (140 aa).

Belongs to the UPF0134 family.

In Mycoplasma pneumoniae (strain ATCC 29342 / M129 / Subtype 1) (Mycoplasmoides pneumoniae), this protein is UPF0134 protein MPN_094.